Here is a 204-residue protein sequence, read N- to C-terminus: ATP phosphoribosyltransferase (204 aa).

This sequence belongs to the ATP phosphoribosyltransferase family. Short subfamily. Heteromultimer composed of HisG and HisZ subunits.

It is found in the cytoplasm. It carries out the reaction 1-(5-phospho-beta-D-ribosyl)-ATP + diphosphate = 5-phospho-alpha-D-ribose 1-diphosphate + ATP. It functions in the pathway amino-acid biosynthesis; L-histidine biosynthesis; L-histidine from 5-phospho-alpha-D-ribose 1-diphosphate: step 1/9. Catalyzes the condensation of ATP and 5-phosphoribose 1-diphosphate to form N'-(5'-phosphoribosyl)-ATP (PR-ATP). Has a crucial role in the pathway because the rate of histidine biosynthesis seems to be controlled primarily by regulation of HisG enzymatic activity. In Staphylococcus aureus (strain bovine RF122 / ET3-1), this protein is ATP phosphoribosyltransferase.